The following is a 223-amino-acid chain: Cytidylate kinase (223 aa).

10 to 18 (GPASSGKST) contributes to the ATP binding site.

The protein belongs to the cytidylate kinase family. Type 1 subfamily.

Its subcellular location is the cytoplasm. It catalyses the reaction CMP + ATP = CDP + ADP. The catalysed reaction is dCMP + ATP = dCDP + ADP. This Streptococcus pneumoniae serotype 4 (strain ATCC BAA-334 / TIGR4) protein is Cytidylate kinase.